A 62-amino-acid polypeptide reads, in one-letter code: Large ribosomal subunit protein uL29 (62 aa).

It belongs to the universal ribosomal protein uL29 family.

In Chromobacterium violaceum (strain ATCC 12472 / DSM 30191 / JCM 1249 / CCUG 213 / NBRC 12614 / NCIMB 9131 / NCTC 9757 / MK), this protein is Large ribosomal subunit protein uL29.